The sequence spans 325 residues: Natural cytotoxicity triggering receptor 1 (325 aa).

The first 16 residues, 1 to 16 (MLPTLTALLCLGLCLS), serve as a signal peptide directing secretion. The Extracellular portion of the chain corresponds to 17–255 (QRINTEKETL…SAFWDHTTQN (239 aa)). Ig-like domains lie at 34–118 (KPSI…LVVT) and 129–211 (YPRP…LLIT). Residues Cys49 and Cys98 are joined by a disulfide bond. The N-linked (GlcNAc...) asparagine glycan is linked to Asn139. The cysteines at positions 144 and 190 are disulfide-linked. Residues Asn216 and Asn238 are each glycosylated (N-linked (GlcNAc...) asparagine). Residues 256-273 (LIRIGLACIILITLVWLL) form a helical membrane-spanning segment. Residues 274-325 (TEDWLSKRKDHEEANRLTNWECRRRWRMQHYFEEEQRNAISMMELKATPGAL) are Cytoplasmic-facing.

It belongs to the natural cytotoxicity receptor (NCR) family. Interacts with CD3Z and FCER1G. Selectively expressed by NK cells.

It localises to the cell membrane. Its function is as follows. Cytotoxicity-activating receptor that may contribute to the increased efficiency of activated natural killer (NK) cells to mediate tumor cell lysis. This Mus musculus (Mouse) protein is Natural cytotoxicity triggering receptor 1 (Ncr1).